The following is a 191-amino-acid chain: MGKKLVMAQKRGETRALCLGVAMVVCAAITYYVLGTTVLPLYQKSVWTQESICHLIETNIKDQEELEGKKVPQYPCLWVNVSAVGRWAMLYHTEDTRDQNQQCSYIPRNLDNYQTALADVKKVRANFYKHHEFYCLSAPQVNETSVVYQRLYGPQVLLFSFFWPTFLLTGGLLLIAMVKLNRSLSILAAQK.

Residues 1–18 (MGKKLVMAQKRGETRALC) lie on the Cytoplasmic side of the membrane. A helical transmembrane segment spans residues 19-39 (LGVAMVVCAAITYYVLGTTVL). At 40–155 (PLYQKSVWTQ…VVYQRLYGPQ (116 aa)) the chain is on the extracellular side. 2 N-linked (GlcNAc...) asparagine glycosylation sites follow: Asn80 and Asn142. The helical transmembrane segment at 156–176 (VLLFSFFWPTFLLTGGLLLIA) threads the bilayer. Over 177–191 (MVKLNRSLSILAAQK) the chain is Cytoplasmic.

Belongs to the KCNMB (TC 8.A.14.1) family. KCNMB1 subfamily. Interacts with KCNMA1 tetramer. There are probably 4 molecules of KCMNB1 per KCNMA1 tetramer. In terms of processing, N-glycosylated. As to expression, expressed in many tissues containing smooth muscles. In brain and heart, it is not expressed except in the vasculature, such as cerebral arteries, aorta and corona arteries.

It localises to the membrane. Functionally, regulatory subunit of the calcium activated potassium KCNMA1 (maxiK) channel. Modulates the calcium sensitivity and gating kinetics of KCNMA1, thereby contributing to KCNMA1 channel diversity. Increases the apparent Ca(2+)/voltage sensitivity of the KCNMA1 channel. It also modifies KCNMA1 channel kinetics and alters its pharmacological properties. It slows down the activation and the deactivation kinetics of the channel. Acts as a negative regulator of smooth muscle contraction by enhancing the calcium sensitivity to KCNMA1. Its presence is also a requirement for internal binding of the KCNMA1 channel opener dehydrosoyasaponin I (DHS-1) triterpene glycoside and for external binding of the agonist hormone 17-beta-estradiol (E2). Increases the binding activity of charybdotoxin (CTX) toxin to KCNMA1 peptide blocker by increasing the CTX association rate and decreasing the dissociation rate. The polypeptide is Calcium-activated potassium channel subunit beta-1 (Kcnmb1) (Mus musculus (Mouse)).